The sequence spans 398 residues: Acetate kinase (398 aa).

Asparagine 7 contacts Mg(2+). Lysine 14 contributes to the ATP binding site. Arginine 91 contributes to the substrate binding site. Aspartate 148 functions as the Proton donor/acceptor in the catalytic mechanism. Residues 208–212, 283–285, and 331–335 contribute to the ATP site; these read HLGNG, DFR, and GIGEH. Residue glutamate 386 participates in Mg(2+) binding.

This sequence belongs to the acetokinase family. As to quaternary structure, homodimer. The cofactor is Mg(2+). Mn(2+) serves as cofactor.

It is found in the cytoplasm. It catalyses the reaction acetate + ATP = acetyl phosphate + ADP. The protein operates within metabolic intermediate biosynthesis; acetyl-CoA biosynthesis; acetyl-CoA from acetate: step 1/2. In terms of biological role, catalyzes the formation of acetyl phosphate from acetate and ATP. Can also catalyze the reverse reaction. The protein is Acetate kinase of Clostridium botulinum (strain Alaska E43 / Type E3).